Here is a 71-residue protein sequence, read N- to C-terminus: Conotoxin TxMMSK-05 (71 aa).

An N-terminal signal peptide occupies residues 1 to 20; the sequence is MMSKLGALLIICLLLFPLTA. A propeptide spanning residues 21–52 is cleaved from the precursor; sequence VPLDGDQHADRPAERLQDDISSKHHPMFDAVR. Disulfide bonds link cysteine 54/cysteine 70, cysteine 55/cysteine 66, and cysteine 60/cysteine 69.

It belongs to the conotoxin M superfamily. As to expression, expressed by the venom duct.

The protein resides in the secreted. In Conus textile (Cloth-of-gold cone), this protein is Conotoxin TxMMSK-05.